Here is a 160-residue protein sequence, read N- to C-terminus: SsrA-binding protein (160 aa).

The disordered stretch occupies residues 133–160 (KKEHDKREDLKEREWQRDKERMMKNKGR).

This sequence belongs to the SmpB family.

It is found in the cytoplasm. Its function is as follows. Required for rescue of stalled ribosomes mediated by trans-translation. Binds to transfer-messenger RNA (tmRNA), required for stable association of tmRNA with ribosomes. tmRNA and SmpB together mimic tRNA shape, replacing the anticodon stem-loop with SmpB. tmRNA is encoded by the ssrA gene; the 2 termini fold to resemble tRNA(Ala) and it encodes a 'tag peptide', a short internal open reading frame. During trans-translation Ala-aminoacylated tmRNA acts like a tRNA, entering the A-site of stalled ribosomes, displacing the stalled mRNA. The ribosome then switches to translate the ORF on the tmRNA; the nascent peptide is terminated with the 'tag peptide' encoded by the tmRNA and targeted for degradation. The ribosome is freed to recommence translation, which seems to be the essential function of trans-translation. The sequence is that of SsrA-binding protein from Tolumonas auensis (strain DSM 9187 / NBRC 110442 / TA 4).